Here is a 204-residue protein sequence, read N- to C-terminus: Tat proofreading chaperone DmsD (204 aa).

The protein belongs to the TorD/DmsD family. DmsD subfamily.

Its function is as follows. Required for biogenesis/assembly of DMSO reductase, but not for the interaction of the DmsA signal peptide with the Tat system. May be part of a chaperone cascade complex that facilitates a folding-maturation pathway for the substrate protein. The protein is Tat proofreading chaperone DmsD of Escherichia coli O157:H7.